The primary structure comprises 700 residues: Acetoacetyl-CoA synthetase (700 aa).

The disordered stretch occupies residues 1-35; sequence MTAVSANGKTTEKHENGAHTNGTTNGTTNGSMNGN. Residues 18 to 35 are compositionally biased toward low complexity; sequence AHTNGTTNGTTNGSMNGN.

The protein belongs to the ATP-dependent AMP-binding enzyme family. Present in most cells of the organism.

It is found in the cytoplasm. Its subcellular location is the nucleus. The enzyme catalyses acetoacetate + ATP + CoA = acetoacetyl-CoA + AMP + diphosphate. In terms of biological role, activates acetoacetate to acetoacetyl-CoA. Negatively regulates let-60 Ras activity during vulval induction. The protein is Acetoacetyl-CoA synthetase (sur-5) of Caenorhabditis elegans.